A 66-amino-acid chain; its full sequence is Large ribosomal subunit protein bL35 (66 aa).

The span at 1-26 (MPKMKTHRGSAKRFKKTGSGKLKRSH) shows a compositional bias: basic residues. The disordered stretch occupies residues 1–45 (MPKMKTHRGSAKRFKKTGSGKLKRSHAYTSHLFANKSQKQKRKLR).

This sequence belongs to the bacterial ribosomal protein bL35 family.

In Bacillus velezensis (strain DSM 23117 / BGSC 10A6 / LMG 26770 / FZB42) (Bacillus amyloliquefaciens subsp. plantarum), this protein is Large ribosomal subunit protein bL35.